A 98-amino-acid chain; its full sequence is uncharacterized protein (98 aa).

This is an uncharacterized protein from Acidianus two-tailed virus (ATV).